An 807-amino-acid chain; its full sequence is Tyrosine-protein kinase receptor torso (807 aa).

Residues 1–28 form the signal peptide; sequence MYSEGKLLKVFLIFAGFIIFSLCGEVVS. At 29–370 the chain is on the extracellular side; it reads QRYPPAPGLL…RAFTPGMLRW (342 aa). 4 disulfides stabilise this stretch: C46–C61, C81–C203, C210–C239, and C259–C265. 4 N-linked (GlcNAc...) asparagine glycosylation sites follow: N54, N171, N183, and N195. Residues N307, N323, and N344 are each glycosylated (N-linked (GlcNAc...) asparagine). A helical transmembrane segment spans residues 371–391; that stretch reads VWAGATAGAGCAAGGLLAATL. At 392–807 the chain is on the cytoplasmic side; the sequence is LCCGHRRATS…SPPVIQTKTA (416 aa). The Protein kinase domain maps to 439–738; it reads VLLHEVIGEG…PTFPELHQKL (300 aa). Residues 445 to 453 and K468 contribute to the ATP site; that span reads IGEGAFGVV. The Proton acceptor role is filled by D607.

The protein belongs to the protein kinase superfamily. Tyr protein kinase family. Homodimer; disulfide-linked. Requires Mg(2+) as cofactor. Post-translationally, may be auto-phosphorylated on tyrosine residues. At least one of the 3 cysteine residues Cys-381, Cys-393 or Cys-394 is involved in the formation of interchain disulfide bonds. The disulfide bond sites in the extracellular region are not involved in homodimer formation.

The protein localises to the cell membrane. The enzyme catalyses L-tyrosyl-[protein] + ATP = O-phospho-L-tyrosyl-[protein] + ADP + H(+). Probable receptor tyrosine kinase. During postembryonic development, involved in the initiation of metamorphosis probably by inducing the production of ecdysone in response to prothoracicotropic hormone (PTTH). Binding to PTTH stimulates activation of canonical MAPK signaling leading to ERK phosphorylation. This Bombyx mori (Silk moth) protein is Tyrosine-protein kinase receptor torso.